The primary structure comprises 194 residues: H-N-H endonuclease F-TflI (194 aa).

Endonuclease that cleaves only one strand of asymmetric DNA substrates thereby introducing interruptions into the template or coding strand. In Escherichia coli (Enterobacteria phage T5), this protein is H-N-H endonuclease F-TflI.